Consider the following 68-residue polypeptide: DNA-directed RNA polymerase subunit omega (68 aa).

The protein belongs to the RNA polymerase subunit omega family. As to quaternary structure, the RNAP catalytic core consists of 2 alpha, 1 beta, 1 beta' and 1 omega subunit. When a sigma factor is associated with the core the holoenzyme is formed, which can initiate transcription.

The enzyme catalyses RNA(n) + a ribonucleoside 5'-triphosphate = RNA(n+1) + diphosphate. Functionally, promotes RNA polymerase assembly. Latches the N- and C-terminal regions of the beta' subunit thereby facilitating its interaction with the beta and alpha subunits. In Brevibacillus brevis (strain 47 / JCM 6285 / NBRC 100599), this protein is DNA-directed RNA polymerase subunit omega.